Consider the following 353-residue polypeptide: Transcription factor MafA (353 aa).

Position 14 is a phosphoserine (Ser14). Lys32 is covalently cross-linked (Glycyl lysine isopeptide (Lys-Gly) (interchain with G-Cter in SUMO2)). Disordered stretches follow at residues 40-108 and 177-219; these read RFCH…GGTS and ADDM…GAGH. Residues 46 to 73 are compositionally biased toward low complexity; sequence PPGSLSSTPLSTPCSSVPSSPSFCAPSP. Residue Ser49 is modified to Phosphoserine. Thr53 and Thr57 each carry phosphothreonine. A phosphoserine mark is found at Ser61 and Ser65. The segment covering 74-93 has biased composition (gly residues); sequence GTGGGGGAGGGGGSSQAGGA. Over residues 183–210 the composition is skewed to basic residues; it reads GHHHGAHHAAHHHHAAHHHHHHHHHHGG. The segment at 254–279 is basic motif; sequence RLKQKRRTLKNRGYAQSCRFKRVQQR. One can recognise a bZIP domain in the interval 254-317; it reads RLKQKRRTLK…DLYKEKYEKL (64 aa). A leucine-zipper region spans residues 282-303; the sequence is LESEKCQLQSQVEQLKLEVGRL. The segment at 315 to 353 is disordered; sequence EKLAGRGGPGSAGGAGFPREPSPPQAGPGGAKGTADFFL. Residues 319-330 are compositionally biased toward gly residues; the sequence is GRGGPGSAGGAG.

Belongs to the bZIP family. Maf subfamily. In terms of assembly, forms homodimers or heterodimers. Monomers and dimers are able to bind DNA, but the off-rate is faster for monomers. Interacts with NEUROD1 and PDX1. May interact with MAFB, FOS, JUN and PCAF. In terms of processing, ubiquitinated, leading to its degradation by the proteasome. Post-translationally, phosphorylated at tyrosines. Expressed in the islets of Langerhans (at protein level).

The protein resides in the nucleus. Functionally, transcription factor that activates insulin gene expression. Acts synergistically with NEUROD1/BETA2 and PDX1. Binds the insulin enhancer C1/RIPE3b element. Binds to consensus TRE-type MARE 5'-TGCTGACTCAGCA-3' DNA sequence. This Homo sapiens (Human) protein is Transcription factor MafA (MAFA).